A 249-amino-acid polypeptide reads, in one-letter code: tRNA (guanine-N(1)-)-methyltransferase (249 aa).

S-adenosyl-L-methionine-binding positions include Gly118 and 138–143; that span reads IGDYVL.

Belongs to the RNA methyltransferase TrmD family. As to quaternary structure, homodimer.

It is found in the cytoplasm. The catalysed reaction is guanosine(37) in tRNA + S-adenosyl-L-methionine = N(1)-methylguanosine(37) in tRNA + S-adenosyl-L-homocysteine + H(+). Specifically methylates guanosine-37 in various tRNAs. In Alkaliphilus oremlandii (strain OhILAs) (Clostridium oremlandii (strain OhILAs)), this protein is tRNA (guanine-N(1)-)-methyltransferase.